Reading from the N-terminus, the 1452-residue chain is Arf-GAP with Rho-GAP domain, ANK repeat and PH domain-containing protein 1 (1452 aa).

The region spanning 6–70 (DAALSVAEWL…LAGLHRAHAP (65 aa)) is the SAM domain. The segment at 81–90 (PVPMKRHIFR) is required for interaction with SH3KBP1. Disordered stretches follow at residues 87–258 (HIFR…LPSR) and 271–304 (EGEELSGDDSEDDDDHAYEGIPNGGWPTSGLNPP). Pro residues-rich tracts occupy residues 92–104 (PPVPVTPPEPPPT), 154–167 (SVPPVPPRTGPPYP), and 205–225 (PLQPPSPPPCPPVIPPKPPRL). Composition is skewed to acidic residues over residues 228–239 (EFDDSDYDDVPE) and 271–286 (EGEELSGDDSEDDDDH). At Ser-232 the chain carries Phosphoserine. Tyr-234 carries the post-translational modification Phosphotyrosine; by PTK6. A PH 1 domain is found at 329–421 (PVIKAGWLDK…WMQALQQAVV (93 aa)). Ser-430 carries the phosphoserine modification. In terms of domain architecture, PH 2 spans 442–531 (QPDRAGSLEL…WLEAMQGAIA (90 aa)). At Tyr-506 the chain carries Phosphotyrosine. One can recognise an Arf-GAP domain in the interval 537-662 (SEVAERIWAA…RYHPLFGNQE (126 aa)). The segment at 552-575 (CADCGAAQPDWASINLCVVICKRC) adopts a C4-type zinc-finger fold. The residue at position 740 (Ser-740) is a Phosphoserine. Residues 745–852 (TVSHSGFLYK…WVKCIAKAFV (108 aa)) enclose the PH 3 domain. In terms of domain architecture, Rho-GAP spans 956–1141 (ASLGDTLSEQ…DLINHYVVVF (186 aa)). One can recognise a Ras-associating domain in the interval 1174-1263 (GDFICTVYLE…SHLVVKKYQS (90 aa)). Residues 1276–1398 (GDTKHGMMKF…WFATFLSVQH (123 aa)) form the PH 4 domain. Residues Ser-1430 and Ser-1437 each carry the phosphoserine modification.

As to quaternary structure, interacts with SH3KBP1/CIN85 (via SH3 domains). The interaction is independent of EGF and does not affect ARAP1 GTPase-activating activity but is involved in regulating ubiquitination and endocytic trafficking of EGFR. ARAP1 competes with E3 ubiquitin-protein ligase CBL for binding to SH3KBP1, preventing interaction of CBL with SH3KBP1; this is likely to regulate SH3KBP1-mediated internalization of EGFR. Interacts with TNFRSF10A. In terms of processing, phosphorylated by PTK6 following EGF stimulation which enhances EGFR signaling by delaying EGFR down-regulation; the interaction is mediated by the SH2 domain of PTK6. Phosphorylation promotes association with the Golgi apparatus and endosomes. As to expression, expressed in the retina where it is detected in Mueller glia (at protein level). Also detected in the retinal pigment epithelium (at protein level). Expressed in osteoclasts (at protein level).

Its subcellular location is the cytoplasm. The protein localises to the golgi apparatus. It localises to the trans-Golgi network. The protein resides in the golgi stack membrane. It is found in the cell membrane. Its subcellular location is the endosome. The protein localises to the multivesicular body. It localises to the cell projection. The protein resides in the ruffle. It is found in the podosome. Its subcellular location is the early endosome. Its function is as follows. Phosphatidylinositol 3,4,5-trisphosphate-dependent GTPase-activating protein that modulates actin cytoskeleton remodeling by regulating ARF and RHO family members. Activated by phosphatidylinositol 3,4,5-trisphosphate (PtdIns(3,4,5)P3) binding and, to a lesser extent, by phosphatidylinositol 3,4-bisphosphate (PtdIns(3,4)P2) binding. Has a preference for ARF1 and ARF5. Positively regulates the ring size of circular dorsal ruffles and promotes macropinocytosis. Acts as a bridging factor in osteoclasts to control actin and membrane dynamics. Regulates the condensing of osteoclast podosomes into sealing zones which segregate the bone-facing membrane from other membrane domains and are required for osteoclast resorption activity. Also regulates recruitment of the AP-3 complex to endosomal membranes and trafficking of lysosomal membrane proteins to the ruffled membrane border of osteoclasts to modulate bone resorption. Regulates the endocytic trafficking of EGFR. Regulates the incorporation of CD63 and CD9 into multivesicular bodies. Required in the retinal pigment epithelium (RPE) for photoreceptor survival due to its role in promoting RPE phagocytosis. The polypeptide is Arf-GAP with Rho-GAP domain, ANK repeat and PH domain-containing protein 1 (Mus musculus (Mouse)).